The chain runs to 201 residues: MQLGLDFNLVEDLVAGVDEVGRGPLCGPVVTAAVILDPSRPILGLNDSKKLSEARREALFEEIREKALAWCIARAEVEEIDRLNILHATMLAMQRAVEGLSVIPRLALIDGNRCPKLAVPCAPVVKGDSQVPAIAAASILAKVSRDREMVELDRVYPGYGMAGHKGYPTAVHLEALSRLGPTPIHRRSFAPVRELLDVSVQ.

Residues 12-201 (DLVAGVDEVG…VRELLDVSVQ (190 aa)) enclose the RNase H type-2 domain. 3 residues coordinate a divalent metal cation: Asp18, Glu19, and Asp110.

The protein belongs to the RNase HII family. Mn(2+) serves as cofactor. Requires Mg(2+) as cofactor.

The protein resides in the cytoplasm. The catalysed reaction is Endonucleolytic cleavage to 5'-phosphomonoester.. In terms of biological role, endonuclease that specifically degrades the RNA of RNA-DNA hybrids. This chain is Ribonuclease HII, found in Pseudomonas aeruginosa (strain ATCC 15692 / DSM 22644 / CIP 104116 / JCM 14847 / LMG 12228 / 1C / PRS 101 / PAO1).